The sequence spans 294 residues: Protoheme IX farnesyltransferase 1 (294 aa).

Transmembrane regions (helical) follow at residues 8 to 28 (VTKP…FLLA), 35 to 55 (PWLM…GCAI), 82 to 102 (AMAA…LLIA), 107 to 127 (AAVF…SLYM), 132 to 152 (VYGT…GYCA), 162 to 182 (LILL…IAIF), 208 to 228 (IVLY…SGYT), 229 to 249 (GAAF…MALR), and 263 to 283 (QVFA…AVDY).

It belongs to the UbiA prenyltransferase family. Protoheme IX farnesyltransferase subfamily.

The protein localises to the cell inner membrane. The catalysed reaction is heme b + (2E,6E)-farnesyl diphosphate + H2O = Fe(II)-heme o + diphosphate. Its pathway is porphyrin-containing compound metabolism; heme O biosynthesis; heme O from protoheme: step 1/1. In terms of biological role, converts heme B (protoheme IX) to heme O by substitution of the vinyl group on carbon 2 of heme B porphyrin ring with a hydroxyethyl farnesyl side group. The polypeptide is Protoheme IX farnesyltransferase 1 (Pseudoalteromonas translucida (strain TAC 125)).